Reading from the N-terminus, the 401-residue chain is O-methyltransferase SAT18 (401 aa).

D249 serves as a coordination point for S-adenosyl-L-methionine. H300 acts as the Proton acceptor in catalysis.

Belongs to the class I-like SAM-binding methyltransferase superfamily. Cation-independent O-methyltransferase family.

The protein operates within mycotoxin biosynthesis. O-methyltransferase; part of the satratoxin SC3 cluster involved in the biosynthesis of satratoxins, trichothecene mycotoxins that are associated with human food poisonings. Satratoxins are suggested to be made by products of multiple gene clusters (SC1, SC2 and SC3) that encode 21 proteins in all, including polyketide synthases, acetyltransferases, and other enzymes expected to modify the trichothecene skeleton. SC1 encodes 10 proteins, SAT1 to SAT10. The largest are SAT8, which encodes a putative polyketide synthase (PKS) with a conventional non-reducing architecture, and SAT10, a putative protein containing four ankyrin repeats and thus may be involved in protein scaffolding. The putative short-chain reductase SAT3 may assist the PKS in some capacity. SAT6 contains a secretory lipase domain and acts probably as a trichothecene esterase. SAT5 encodes a putative acetyltransferase, and so, with SAT6, may affect endogenous protection from toxicity. The probable transcription factor SAT9 may regulate the expression of the SC1 cluster. SC2 encodes proteins SAT11 to SAT16, the largest of which encodes the putative reducing PKS SAT13. SAT11 is a cytochrome P450 monooxygenase, while SAT14 and SAT16 are probable acetyltransferases. The SC2 cluster may be regulated by the transcription factor SAT15. SC3 is a small cluster that encodes 5 proteins, SAT17 to SAT21. SAT21 is a putative MFS-type transporter which may have a role in exporting secondary metabolites. The four other proteins putatively encoded in SC3 include the taurine hydroxylase-like protein SAT17, the O-methyltransferase SAT18, the acetyltransferase SAT19, and the Cys6-type zinc finger SAT20, the latter being probably involved in regulation of SC3 expression. This Stachybotrys chartarum (strain CBS 109288 / IBT 7711) (Toxic black mold) protein is O-methyltransferase SAT18.